Here is a 343-residue protein sequence, read N- to C-terminus: Ferrochelatase (343 aa).

The Fe cation site is built by histidine 211 and glutamate 292.

The protein belongs to the ferrochelatase family.

It localises to the cytoplasm. It carries out the reaction heme b + 2 H(+) = protoporphyrin IX + Fe(2+). Its pathway is porphyrin-containing compound metabolism; protoheme biosynthesis; protoheme from protoporphyrin-IX: step 1/1. Its function is as follows. Catalyzes the ferrous insertion into protoporphyrin IX. This is Ferrochelatase from Gluconobacter oxydans (strain 621H) (Gluconobacter suboxydans).